A 105-amino-acid polypeptide reads, in one-letter code: Flagellar transcriptional regulator FlhD (105 aa).

The protein belongs to the FlhD family. As to quaternary structure, homodimer; disulfide-linked. Forms a heterohexamer composed of two FlhC and four FlhD subunits. Each FlhC binds a FlhD dimer, forming a heterotrimer, and a hexamer assembles by dimerization of two heterotrimers.

The protein resides in the cytoplasm. Functionally, functions in complex with FlhC as a master transcriptional regulator that regulates transcription of several flagellar and non-flagellar operons by binding to their promoter region. Activates expression of class 2 flagellar genes, including fliA, which is a flagellum-specific sigma factor that turns on the class 3 genes. Also regulates genes whose products function in a variety of physiological pathways. The chain is Flagellar transcriptional regulator FlhD from Ralstonia nicotianae (strain ATCC BAA-1114 / GMI1000) (Ralstonia solanacearum).